A 118-amino-acid chain; its full sequence is Large ribosomal subunit protein bL20 (118 aa).

The protein belongs to the bacterial ribosomal protein bL20 family.

In terms of biological role, binds directly to 23S ribosomal RNA and is necessary for the in vitro assembly process of the 50S ribosomal subunit. It is not involved in the protein synthesizing functions of that subunit. This chain is Large ribosomal subunit protein bL20, found in Sulfurimonas denitrificans (strain ATCC 33889 / DSM 1251) (Thiomicrospira denitrificans (strain ATCC 33889 / DSM 1251)).